A 222-amino-acid chain; its full sequence is Hexitol phosphatase B (222 aa).

The active-site Nucleophile is D13. The a divalent metal cation site is built by D13 and D15. Substrate contacts are provided by residues 13–15 (DMD), 115–116 (SA), and K148. Residue D15 is the Proton donor of the active site. An a divalent metal cation-binding site is contributed by D173.

The protein belongs to the HAD-like hydrolase superfamily. CbbY/CbbZ/Gph/YieH family. The cofactor is Mg(2+). Requires Mn(2+) as cofactor. Co(2+) is required as a cofactor. Zn(2+) serves as cofactor.

The catalysed reaction is sugar phosphate + H2O = sugar + phosphate.. It catalyses the reaction 2-deoxy-D-glucose 6-phosphate + H2O = 2-deoxy-D-glucose + phosphate. The enzyme catalyses D-mannitol 1-phosphate + H2O = D-mannitol + phosphate. It carries out the reaction D-sorbitol 6-phosphate + H2O = D-sorbitol + phosphate. Its function is as follows. Sugar-phosphate phosphohydrolase that catalyzes the dephosphorylation of D-mannitol 1-phosphate and D-sorbitol 6-phosphate. Also catalyzes the dephosphorylation of 2-deoxyglucose 6-phosphate (2dGlu6P); this is a biologically important activity in vivo since it contributes to the elimination of this toxic compound and plays an important role in the resistance of E.coli to 2-deoxyglucose. To a lesser extent, is also able to dephosphorylate mannose 6-phosphate (Man6P), erythrose-4-phosphate, 2-deoxyribose-5-phosphate (2dRib5P), ribose-5-phosphate (Rib5P) and glucose-6-phosphate (Glu6P) in vitro. The polypeptide is Hexitol phosphatase B (Escherichia coli (strain K12)).